Consider the following 193-residue polypeptide: dCTP deaminase (193 aa).

DCTP is bound by residues 110 to 115 (RSSLAR), Asp128, 136 to 138 (VLE), Tyr171, Lys178, and Gln182. Catalysis depends on Glu138, which acts as the Proton donor/acceptor. Residues 169–193 (RPYNRRQDAKYRDQQGAVASRIDKD) are disordered.

The protein belongs to the dCTP deaminase family. As to quaternary structure, homotrimer.

The catalysed reaction is dCTP + H2O + H(+) = dUTP + NH4(+). It functions in the pathway pyrimidine metabolism; dUMP biosynthesis; dUMP from dCTP (dUTP route): step 1/2. In terms of biological role, catalyzes the deamination of dCTP to dUTP. The polypeptide is dCTP deaminase (Cronobacter sakazakii (strain ATCC BAA-894) (Enterobacter sakazakii)).